The sequence spans 259 residues: Ribonuclease PH (259 aa).

Residues Arg88 and 126–128 (GTR) each bind phosphate.

This sequence belongs to the RNase PH family. As to quaternary structure, homohexameric ring arranged as a trimer of dimers.

The enzyme catalyses tRNA(n+1) + phosphate = tRNA(n) + a ribonucleoside 5'-diphosphate. Phosphorolytic 3'-5' exoribonuclease that plays an important role in tRNA 3'-end maturation. Removes nucleotide residues following the 3'-CCA terminus of tRNAs; can also add nucleotides to the ends of RNA molecules by using nucleoside diphosphates as substrates, but this may not be physiologically important. Probably plays a role in initiation of 16S rRNA degradation (leading to ribosome degradation) during starvation. In Mycolicibacterium paratuberculosis (strain ATCC BAA-968 / K-10) (Mycobacterium paratuberculosis), this protein is Ribonuclease PH.